A 322-amino-acid chain; its full sequence is GTP 3',8-cyclase (322 aa).

In terms of domain architecture, Radical SAM core spans 5 to 217 (SYGRVIDYLR…NIIAQKYSFK (213 aa)). Arginine 14 serves as a coordination point for GTP. [4Fe-4S] cluster is bound by residues cysteine 21 and cysteine 25. Tyrosine 27 is an S-adenosyl-L-methionine binding site. Cysteine 28 contacts [4Fe-4S] cluster. Arginine 64 contacts GTP. Glycine 68 lines the S-adenosyl-L-methionine pocket. Threonine 95 provides a ligand contact to GTP. Serine 119 is a binding site for S-adenosyl-L-methionine. Lysine 155 contacts GTP. S-adenosyl-L-methionine is bound at residue methionine 189. Cysteine 249 and cysteine 252 together coordinate [4Fe-4S] cluster. 254-256 (RIR) lines the GTP pocket. A [4Fe-4S] cluster-binding site is contributed by cysteine 266.

The protein belongs to the radical SAM superfamily. MoaA family. As to quaternary structure, monomer and homodimer. [4Fe-4S] cluster is required as a cofactor.

It carries out the reaction GTP + AH2 + S-adenosyl-L-methionine = (8S)-3',8-cyclo-7,8-dihydroguanosine 5'-triphosphate + 5'-deoxyadenosine + L-methionine + A + H(+). Its pathway is cofactor biosynthesis; molybdopterin biosynthesis. Catalyzes the cyclization of GTP to (8S)-3',8-cyclo-7,8-dihydroguanosine 5'-triphosphate. The protein is GTP 3',8-cyclase of Campylobacter lari (strain RM2100 / D67 / ATCC BAA-1060).